The chain runs to 194 residues: ATP-dependent Clp protease proteolytic subunit 4 (194 aa).

Catalysis depends on Ser100, which acts as the Nucleophile. Residue His125 is part of the active site.

Belongs to the peptidase S14 family. As to quaternary structure, fourteen ClpP subunits assemble into 2 heptameric rings which stack back to back to give a disk-like structure with a central cavity, resembling the structure of eukaryotic proteasomes.

It is found in the cytoplasm. The catalysed reaction is Hydrolysis of proteins to small peptides in the presence of ATP and magnesium. alpha-casein is the usual test substrate. In the absence of ATP, only oligopeptides shorter than five residues are hydrolyzed (such as succinyl-Leu-Tyr-|-NHMec, and Leu-Tyr-Leu-|-Tyr-Trp, in which cleavage of the -Tyr-|-Leu- and -Tyr-|-Trp bonds also occurs).. Its function is as follows. Cleaves peptides in various proteins in a process that requires ATP hydrolysis. Has a chymotrypsin-like activity. Plays a major role in the degradation of misfolded proteins. The chain is ATP-dependent Clp protease proteolytic subunit 4 from Rhodococcus jostii (strain RHA1).